The primary structure comprises 321 residues: tRNA U34 carboxymethyltransferase (321 aa).

Residues K90, W104, K109, G129, 151 to 153 (DPT), 180 to 181 (IE), M195, Y199, and R314 contribute to the carboxy-S-adenosyl-L-methionine site.

Belongs to the class I-like SAM-binding methyltransferase superfamily. CmoB family. As to quaternary structure, homotetramer.

It carries out the reaction carboxy-S-adenosyl-L-methionine + 5-hydroxyuridine(34) in tRNA = 5-carboxymethoxyuridine(34) in tRNA + S-adenosyl-L-homocysteine + H(+). Catalyzes carboxymethyl transfer from carboxy-S-adenosyl-L-methionine (Cx-SAM) to 5-hydroxyuridine (ho5U) to form 5-carboxymethoxyuridine (cmo5U) at position 34 in tRNAs. The protein is tRNA U34 carboxymethyltransferase of Haemophilus influenzae (strain PittEE).